The following is an 80-amino-acid chain: Small, acid-soluble spore protein Tlp (80 aa).

Belongs to the Tlp family.

It is found in the spore core. In Bacillus pumilus (strain SAFR-032), this protein is Small, acid-soluble spore protein Tlp.